Reading from the N-terminus, the 570-residue chain is Dual specificity testis-specific protein kinase 2 (570 aa).

Residues 58-313 enclose the Protein kinase domain; the sequence is DFTREKIGSG…EIGKTLKEIM (256 aa). Residues 64–72 and lysine 87 each bind ATP; that span reads IGSGFFSEV. Catalysis depends on aspartate 176, which acts as the Proton acceptor. Serine 219 carries the phosphoserine; by autocatalysis modification. The span at 316–327 shows a compositional bias: basic and acidic residues; that stretch reads LPEEELERDRKL. A disordered region spans residues 316-357; the sequence is LPEEELERDRKLQPTAKGPLEKVPGGKRLSSLDDKIPHKSPR. Residues serine 369, serine 456, and serine 460 each carry the phosphoserine modification. The segment at 511-530 is disordered; the sequence is AMDCSNPQEENGFGPRLKGT.

This sequence belongs to the protein kinase superfamily. TKL Ser/Thr protein kinase family. It depends on Mg(2+) as a cofactor. Requires Mn(2+) as cofactor.

Its subcellular location is the nucleus. The catalysed reaction is L-seryl-[protein] + ATP = O-phospho-L-seryl-[protein] + ADP + H(+). It carries out the reaction L-threonyl-[protein] + ATP = O-phospho-L-threonyl-[protein] + ADP + H(+). It catalyses the reaction L-tyrosyl-[protein] + ATP = O-phospho-L-tyrosyl-[protein] + ADP + H(+). Its activity is regulated as follows. Activated by autophosphorylation on Ser-219. Functionally, dual specificity protein kinase activity catalyzing autophosphorylation and phosphorylation of exogenous substrates on both serine/threonine and tyrosine residues. Phosphorylates cofilin at 'Ser-3'. May play an important role in spermatogenesis. The chain is Dual specificity testis-specific protein kinase 2 (Tesk2) from Mus musculus (Mouse).